The following is a 92-amino-acid chain: MARSLKKNPFVANHLLKKIERLNTKAEKEIIITWSRASTIIPTMIGHTIAIHNGKEHLPIYITDRMVGHKLGEFAPTINFRGHAKNDNKSRR.

This sequence belongs to the universal ribosomal protein uS19 family.

It is found in the plastid. The protein resides in the chloroplast. Functionally, protein S19 forms a complex with S13 that binds strongly to the 16S ribosomal RNA. This Gossypium barbadense (Sea Island cotton) protein is Small ribosomal subunit protein uS19c.